Here is an 837-residue protein sequence, read N- to C-terminus: WW domain-containing protein tag-325 (837 aa).

The span at 1–11 (MTTAVQPSDTT) shows a compositional bias: polar residues. The interval 1 to 66 (MTTAVQPSDT…SNGQNYADDP (66 aa)) is disordered. The span at 33–43 (SESAESSSSSS) shows a compositional bias: low complexity. The span at 44 to 61 (QTNVSAANTLPRESNGQN) shows a compositional bias: polar residues. The 34-residue stretch at 96-129 (RDLLNGWFEYETDVGRTFFFNKETGKSQWIPPRF) folds into the WW domain. Positions 150–161 (TCSFQGSSTSSS) are enriched in low complexity. Disordered regions lie at residues 150-181 (TCSF…RKSQ), 194-257 (DDVD…STAS), 338-403 (TTSS…EPAE), 548-574 (MRRR…EPRP), and 778-800 (KNKK…TPVQ). The segment covering 162–181 (EEQKENKMRESLADDDRKSQ) has biased composition (basic and acidic residues). Residues 247 to 257 (PTSSRKASTAS) show a composition bias toward polar residues. A compositionally biased stretch (basic and acidic residues) spans 371 to 403 (RCEERRGSGDGREPVRTIRCGDLERSENDEPAE). The 120-residue stretch at 386-505 (RTIRCGDLER…WYKSLEEVVA (120 aa)) folds into the PH domain. Polar residues predominate over residues 556-569 (SQSAIETVSTSVST). Residues 610-827 (STLSAICQHE…YLLESANKFD (218 aa)) form the Rho-GAP domain. Residues 778 to 788 (KNKKAGKKAKP) show a composition bias toward basic residues.

This chain is WW domain-containing protein tag-325 (tag-325), found in Caenorhabditis elegans.